The chain runs to 391 residues: Chaperone protein DnaJ (391 aa).

Residues 6–71 (CYYEVLKVER…NKRARYDQYG (66 aa)) form the J domain. A CR-type zinc finger spans residues 137 to 215 (GCHKDIVFRR…CRGTGTQNEK (79 aa)). Zn(2+)-binding residues include C150, C153, C167, C170, C189, C192, C203, and C206. CXXCXGXG motif repeat units lie at residues 150-157 (CDTCDGSG), 167-174 (CTMCGGQG), 189-196 (CPTCKGAG), and 203-210 (CGKCRGTG). A disordered region spans residues 372–391 (FFDPEPEEAGTGSTDTEKDS).

It belongs to the DnaJ family. As to quaternary structure, homodimer. It depends on Zn(2+) as a cofactor.

The protein localises to the cytoplasm. Its function is as follows. Participates actively in the response to hyperosmotic and heat shock by preventing the aggregation of stress-denatured proteins and by disaggregating proteins, also in an autonomous, DnaK-independent fashion. Unfolded proteins bind initially to DnaJ; upon interaction with the DnaJ-bound protein, DnaK hydrolyzes its bound ATP, resulting in the formation of a stable complex. GrpE releases ADP from DnaK; ATP binding to DnaK triggers the release of the substrate protein, thus completing the reaction cycle. Several rounds of ATP-dependent interactions between DnaJ, DnaK and GrpE are required for fully efficient folding. Also involved, together with DnaK and GrpE, in the DNA replication of plasmids through activation of initiation proteins. The polypeptide is Chaperone protein DnaJ (Rhodopirellula baltica (strain DSM 10527 / NCIMB 13988 / SH1)).